The chain runs to 1141 residues: Serine-aspartate repeat-containing protein E (1141 aa).

A signal peptide spans 1–52 (MINRDNKKAITKKGMISNRLNKFSIRKYTVGTASILVGTTLIFGLGNQEAKA). The YSIRK-G/S signaling motif motif lies at 23 to 34 (FSIRKYTVGTAS). Residues 53–601 (AENTSTENAK…GDGTVKPEEK (549 aa)) form a ligand binding A region region. The segment at 54 to 225 (ENTSTENAKQ…SKEELKNNPE (172 aa)) is disordered. Basic and acidic residues predominate over residues 61-75 (AKQDDATTSDNKEVV). Over residues 77–90 (EAENNSTTENDSTN) the composition is skewed to low complexity. A compositionally biased stretch (basic and acidic residues) spans 92–109 (IKKETNTDSQPEAKEEST). The segment covering 110–126 (KSSTQQQQNNVTATTET) has biased composition (low complexity). Residues 130-145 (NIEKENVKPSTDKTAT) show a composition bias toward basic and acidic residues. The segment covering 158 to 207 (PNNTNNDVTTKPSTSEIQTKPTTPQESTNIENSQPQPTPSKVDNQVTDAT) has biased composition (polar residues). The span at 216–225 (SKEELKNNPE) shows a compositional bias: basic and acidic residues. CNA-B domains are found at residues 602-714 (LYKI…YKEP), 715-824 (KYNL…YKTP), and 825-935 (KYSL…EEDT). Residues 899 to 1117 (VTNTTEDDKD…GSENNGSNNA (219 aa)) form a disordered region. 2 stretches are compositionally biased toward acidic residues: residues 903–913 (TEDDKDADGGE) and 930–1080 (YFEE…DSDS). Residues 1104–1108 (LPETG) carry the LPXTG sorting signal motif. Thr1107 bears the Pentaglycyl murein peptidoglycan amidated threonine mark. The propeptide at 1108 to 1141 (GSENNGSNNATLFGGLFAALGSLLLFGRRKKQNK) is removed by sortase.

Belongs to the serine-aspartate repeat-containing protein (SDr) family. In terms of assembly, interacts with host complement factor H/CFAH (via C-terminus). Interacts with host complement regulator C4BPA.

It localises to the secreted. It is found in the cell wall. Its function is as follows. Cell surface-associated calcium-binding protein which plays an important role in adhesion and pathogenesis. Contributes to the resistance to killing by innate immune components in blood and thus attenuates bacterial clearance by interacting with host complement factor H/CFAH and modulating its activity. Also inhibits bacterial opsonization and killing by interacting with host complement regulator C4BPA and thus inhibiting classical complement pathway activation. In Staphylococcus aureus (strain MSSA476), this protein is Serine-aspartate repeat-containing protein E (sdrE).